Consider the following 122-residue polypeptide: Large ribosomal subunit protein bL17 (122 aa).

This sequence belongs to the bacterial ribosomal protein bL17 family. As to quaternary structure, part of the 50S ribosomal subunit. Contacts protein L32.

The sequence is that of Large ribosomal subunit protein bL17 from Staphylococcus carnosus (strain TM300).